The sequence spans 226 residues: Enolase-phosphatase E1 (226 aa).

Positions 9 and 11 each coordinate Mg(2+). Substrate is bound by residues 115–116 (SS) and Lys-160. Residue Asp-185 coordinates Mg(2+).

The protein belongs to the HAD-like hydrolase superfamily. MasA/MtnC family. As to quaternary structure, monomer. The cofactor is Mg(2+).

The protein localises to the cytoplasm. Its subcellular location is the nucleus. It carries out the reaction 5-methylsulfanyl-2,3-dioxopentyl phosphate + H2O = 1,2-dihydroxy-5-(methylsulfanyl)pent-1-en-3-one + phosphate. The protein operates within amino-acid biosynthesis; L-methionine biosynthesis via salvage pathway; L-methionine from S-methyl-5-thio-alpha-D-ribose 1-phosphate: step 3/6. It functions in the pathway amino-acid biosynthesis; L-methionine biosynthesis via salvage pathway; L-methionine from S-methyl-5-thio-alpha-D-ribose 1-phosphate: step 4/6. Bifunctional enzyme that catalyzes the enolization of 2,3-diketo-5-methylthiopentyl-1-phosphate (DK-MTP-1-P) into the intermediate 2-hydroxy-3-keto-5-methylthiopentenyl-1-phosphate (HK-MTPenyl-1-P), which is then dephosphorylated to form the acireductone 1,2-dihydroxy-3-keto-5-methylthiopentene (DHK-MTPene). The protein is Enolase-phosphatase E1 of Zygosaccharomyces rouxii (strain ATCC 2623 / CBS 732 / NBRC 1130 / NCYC 568 / NRRL Y-229).